Here is a 239-residue protein sequence, read N- to C-terminus: 7-cyano-7-deazaguanine synthase (239 aa).

7-17 (LSGGIDSSTLL) contacts ATP. Zn(2+) contacts are provided by Cys-184, Cys-192, Cys-195, and Cys-198.

It belongs to the QueC family. Zn(2+) is required as a cofactor.

It catalyses the reaction 7-carboxy-7-deazaguanine + NH4(+) + ATP = 7-cyano-7-deazaguanine + ADP + phosphate + H2O + H(+). Its pathway is purine metabolism; 7-cyano-7-deazaguanine biosynthesis. Functionally, catalyzes the ATP-dependent conversion of 7-carboxy-7-deazaguanine (CDG) to 7-cyano-7-deazaguanine (preQ(0)). The protein is 7-cyano-7-deazaguanine synthase of Archaeoglobus fulgidus (strain ATCC 49558 / DSM 4304 / JCM 9628 / NBRC 100126 / VC-16).